The chain runs to 102 residues: Thioredoxin (102 aa).

Positions 2-102 (VTEIKSLKQL…KAKIVQLVSQ (101 aa)) constitute a Thioredoxin domain. Cys-30 and Cys-33 form a disulfide bridge.

This sequence belongs to the thioredoxin family.

Its function is as follows. Participates in various redox reactions through the reversible oxidation of its active center dithiol to a disulfide and catalyzes dithiol-disulfide exchange reactions. This Mycoplasma pneumoniae (strain ATCC 29342 / M129 / Subtype 1) (Mycoplasmoides pneumoniae) protein is Thioredoxin (trxA).